The sequence spans 135 residues: Mu-like prophage FluMu protein gp46 (135 aa).

This sequence to phage Mu protein gp46.

The sequence is that of Mu-like prophage FluMu protein gp46 from Haemophilus influenzae (strain ATCC 51907 / DSM 11121 / KW20 / Rd).